The primary structure comprises 522 residues: BTB/POZ domain-containing protein 16 (522 aa).

In terms of domain architecture, BTB spans 166–222 (INDPAVTRVAFALALKNLYMKEVEMTVDNVLGVLASAHILQFNRLFQKCVNMMMNRL).

The chain is BTB/POZ domain-containing protein 16 (Btbd16) from Mus musculus (Mouse).